The primary structure comprises 319 residues: ATP-dependent 6-phosphofructokinase (319 aa).

Gly-11 contacts ATP. Arg-21 to Arg-25 lines the ADP pocket. ATP-binding positions include Arg-72 to Ser-73 and Gly-102 to Ser-105. Mg(2+) is bound at residue Asp-103. Thr-125–Asp-127 lines the substrate pocket. Asp-127 functions as the Proton acceptor in the catalytic mechanism. Residue Arg-154 coordinates ADP. Residues Arg-162 and Met-169–Arg-171 each bind substrate. Residues Gly-185–Glu-187, Arg-211, and Lys-213–His-215 each bind ADP. Residues Glu-222, Arg-243, and His-249–Arg-252 each bind substrate.

It belongs to the phosphofructokinase type A (PFKA) family. ATP-dependent PFK group I subfamily. Prokaryotic clade 'B1' sub-subfamily. Homotetramer. It depends on Mg(2+) as a cofactor.

Its subcellular location is the cytoplasm. The enzyme catalyses beta-D-fructose 6-phosphate + ATP = beta-D-fructose 1,6-bisphosphate + ADP + H(+). It functions in the pathway carbohydrate degradation; glycolysis; D-glyceraldehyde 3-phosphate and glycerone phosphate from D-glucose: step 3/4. Allosterically activated by ADP and other diphosphonucleosides, and allosterically inhibited by phosphoenolpyruvate. In terms of biological role, catalyzes the phosphorylation of D-fructose 6-phosphate to fructose 1,6-bisphosphate by ATP, the first committing step of glycolysis. This is ATP-dependent 6-phosphofructokinase from Oceanobacillus iheyensis (strain DSM 14371 / CIP 107618 / JCM 11309 / KCTC 3954 / HTE831).